The sequence spans 225 residues: 7-cyano-7-deazaguanine synthase (225 aa).

Position 10 to 20 (10 to 20 (FSGGQDSTTLA)) interacts with ATP. Residues Cys190, Cys205, Cys208, and Cys211 each coordinate Zn(2+).

Belongs to the QueC family. Zn(2+) is required as a cofactor.

The catalysed reaction is 7-carboxy-7-deazaguanine + NH4(+) + ATP = 7-cyano-7-deazaguanine + ADP + phosphate + H2O + H(+). It functions in the pathway purine metabolism; 7-cyano-7-deazaguanine biosynthesis. Functionally, catalyzes the ATP-dependent conversion of 7-carboxy-7-deazaguanine (CDG) to 7-cyano-7-deazaguanine (preQ(0)). The chain is 7-cyano-7-deazaguanine synthase from Helicobacter pylori (strain J99 / ATCC 700824) (Campylobacter pylori J99).